Reading from the N-terminus, the 126-residue chain is Small ribosomal subunit protein bS6 (126 aa).

The segment at 99-126 (PLPAPRVVPGTEAPEPAQAAETPEPEAS) is disordered. Over residues 107–120 (PGTEAPEPAQAAET) the composition is skewed to low complexity.

It belongs to the bacterial ribosomal protein bS6 family.

Functionally, binds together with bS18 to 16S ribosomal RNA. The protein is Small ribosomal subunit protein bS6 of Synechococcus sp. (strain CC9902).